A 158-amino-acid polypeptide reads, in one-letter code: Large ribosomal subunit protein uL30 (158 aa).

It belongs to the universal ribosomal protein uL30 family. Part of the 50S ribosomal subunit.

The sequence is that of Large ribosomal subunit protein uL30 from Saccharolobus islandicus (strain Y.N.15.51 / Yellowstone #2) (Sulfolobus islandicus).